Consider the following 236-residue polypeptide: Large ribosomal subunit protein uL3 (236 aa).

The protein belongs to the universal ribosomal protein uL3 family. As to quaternary structure, part of the 50S ribosomal subunit. Forms a cluster with proteins L14 and L19.

Functionally, one of the primary rRNA binding proteins, it binds directly near the 3'-end of the 23S rRNA, where it nucleates assembly of the 50S subunit. The polypeptide is Large ribosomal subunit protein uL3 (Anaeromyxobacter dehalogenans (strain 2CP-1 / ATCC BAA-258)).